Here is an 821-residue protein sequence, read N- to C-terminus: LPS-assembly protein LptD (821 aa).

Positions 1–20 (MGKRLFWTALSGLMVSAAHA) are cleaved as a signal peptide.

The protein belongs to the LptD family. Component of the lipopolysaccharide transport and assembly complex. Interacts with LptE and LptA.

It localises to the cell outer membrane. Its function is as follows. Together with LptE, is involved in the assembly of lipopolysaccharide (LPS) at the surface of the outer membrane. The polypeptide is LPS-assembly protein LptD (Chromohalobacter salexigens (strain ATCC BAA-138 / DSM 3043 / CIP 106854 / NCIMB 13768 / 1H11)).